The sequence spans 195 residues: Nucleoid occlusion factor SlmA (195 aa).

One can recognise an HTH tetR-type domain in the interval T7–L67. A DNA-binding region (H-T-H motif) is located at residues T30–F49. Residues D109–K141 adopt a coiled-coil conformation.

It belongs to the nucleoid occlusion factor SlmA family. As to quaternary structure, homodimer. Interacts with FtsZ.

It is found in the cytoplasm. Its subcellular location is the nucleoid. Functionally, required for nucleoid occlusion (NO) phenomenon, which prevents Z-ring formation and cell division over the nucleoid. Acts as a DNA-associated cell division inhibitor that binds simultaneously chromosomal DNA and FtsZ, and disrupts the assembly of FtsZ polymers. SlmA-DNA-binding sequences (SBS) are dispersed on non-Ter regions of the chromosome, preventing FtsZ polymerization at these regions. In Alteromonas mediterranea (strain DSM 17117 / CIP 110805 / LMG 28347 / Deep ecotype), this protein is Nucleoid occlusion factor SlmA.